We begin with the raw amino-acid sequence, 89 residues long: Cell division topological specificity factor (89 aa).

This sequence belongs to the MinE family.

In terms of biological role, prevents the cell division inhibition by proteins MinC and MinD at internal division sites while permitting inhibition at polar sites. This ensures cell division at the proper site by restricting the formation of a division septum at the midpoint of the long axis of the cell. This Paracoccus denitrificans (strain Pd 1222) protein is Cell division topological specificity factor.